Here is a 249-residue protein sequence, read N- to C-terminus: ATP synthase subunit a (249 aa).

Transmembrane regions (helical) follow at residues isoleucine 35–leucine 55, valine 92–valine 112, isoleucine 131–serine 151, leucine 187–isoleucine 209, and serine 221–glutamate 241.

This sequence belongs to the ATPase A chain family. F-type ATPases have 2 components, CF(1) - the catalytic core - and CF(0) - the membrane proton channel. CF(1) has five subunits: alpha(3), beta(3), gamma(1), delta(1), epsilon(1). CF(0) has four main subunits: a, b, b' and c.

The protein resides in the cellular thylakoid membrane. Functionally, key component of the proton channel; it plays a direct role in the translocation of protons across the membrane. In Trichodesmium erythraeum (strain IMS101), this protein is ATP synthase subunit a.